The following is a 159-amino-acid chain: Neuroglobin (159 aa).

Positions 3–151 (KLSSKDKELI…VVASMSRGWA (149 aa)) constitute a Globin domain. Heme b contacts are provided by H66 and H98.

Belongs to the globin family. Monomer. Homodimers and homotetramers. Mainly monomeric but also detected as part of homodimers and homotetramers.

It localises to the cytoplasm. It is found in the cytosol. The protein localises to the mitochondrion matrix. It carries out the reaction Fe(III)-heme b-[protein] + nitric oxide + H2O = Fe(II)-heme b-[protein] + nitrite + 2 H(+). Its function is as follows. Monomeric globin with a bis-histidyl six-coordinate heme-iron atom through which it can bind dioxygen, carbon monoxide and nitric oxide. Could help transport oxygen and increase its availability to the metabolically active neuronal tissues, though its low quantity in tissues as well as its high affinity for dioxygen, which may limit its oxygen-releasing ability, argue against it. The ferrous/deoxygenated form exhibits a nitrite reductase activity and it could produce nitric oxide which in turn inhibits cellular respiration in response to hypoxia. In its ferrous/deoxygenated state, it may also exhibit GDI (Guanine nucleotide Dissociation Inhibitor) activity toward heterotrimeric G-alpha proteins, thereby regulating signal transduction to facilitate neuroprotective responses in the wake of hypoxia and associated oxidative stress. In Tetraodon nigroviridis (Spotted green pufferfish), this protein is Neuroglobin (ngb).